The sequence spans 148 residues: UPF0179 protein UNCMA_27840 (148 aa).

Belongs to the UPF0179 family.

In Methanocella arvoryzae (strain DSM 22066 / NBRC 105507 / MRE50), this protein is UPF0179 protein UNCMA_27840.